A 447-amino-acid polypeptide reads, in one-letter code: MSNRIISILKKRLARKTWDNWFTTFQVKKVTDDKIIFSVGNLFIKDWLQSKYGSVISKAIKEAYGKNLDYEIVYETTEPEAFNKSNESYKGPLVKKKPLLISNLNANYTFENFVVGPENRVLYEVSLEISRNPGRYNPFFVYGMVGLGKTHLLQAIAHKIMELHPEMRVLYITSEQFMNDMIDSIKYGSVRDFREHYRKKADVLLIDDIQFLIGKNGVQKELFHTFNELYDAGKQIVICSDRNPEELNGFHDRLVSRFQMGMVMEICPPEKDTRFKIAKKFAERESVSLPDDVAQLLADSVDGNLRILRGVIIKLIVQSSINKERIGAALTNQILAAFNKTTVSIKRMKEEDLIMSTIEAVMGVSPEEIKGTSRKQNIVLSRQLLMYILKRHHGKSIKEISKITGKRHSTVIHSIKKIEMSVIKGNTVVKEKLAKILNTMATSSAAG.

The interval 1-66 is domain I, interacts with DnaA modulators; sequence MSNRIISILK…SKAIKEAYGK (66 aa). The domain II stretch occupies residues 66-102; that stretch reads KNLDYEIVYETTEPEAFNKSNESYKGPLVKKKPLLIS. Residues 103-319 form a domain III, AAA+ region region; sequence NLNANYTFEN…GVIIKLIVQS (217 aa). ATP-binding residues include G146, G148, K149, and T150. Residues 320-447 are domain IV, binds dsDNA; that stretch reads SINKERIGAA…NTMATSSAAG (128 aa).

Belongs to the DnaA family. As to quaternary structure, oligomerizes as a right-handed, spiral filament on DNA at oriC.

Its subcellular location is the cytoplasm. Its function is as follows. Plays an essential role in the initiation and regulation of chromosomal replication. ATP-DnaA binds to the origin of replication (oriC) to initiate formation of the DNA replication initiation complex once per cell cycle. Binds the DnaA box (a 9 base pair repeat at the origin) and separates the double-stranded (ds)DNA. Forms a right-handed helical filament on oriC DNA; dsDNA binds to the exterior of the filament while single-stranded (ss)DNA is stabiized in the filament's interior. The ATP-DnaA-oriC complex binds and stabilizes one strand of the AT-rich DNA unwinding element (DUE), permitting loading of DNA polymerase. After initiation quickly degrades to an ADP-DnaA complex that is not apt for DNA replication. Binds acidic phospholipids. The chain is Chromosomal replication initiator protein DnaA from Kosmotoga olearia (strain ATCC BAA-1733 / DSM 21960 / TBF 19.5.1).